The chain runs to 149 residues: Large ribosomal subunit protein uL15 (149 aa).

Basic residues-rich tracts occupy residues 1 to 14 (MPTH…HRGH) and 21 to 30 (RVGKHRKHPG). The segment at 1-42 (MPTHLSKTRKHRGHVSAGHGRVGKHRKHPGGRGLAGGQHHHR) is disordered.

This sequence belongs to the universal ribosomal protein uL15 family.

This Blumeria hordei (Barley powdery mildew) protein is Large ribosomal subunit protein uL15.